Here is a 169-residue protein sequence, read N- to C-terminus: S-ribosylhomocysteine lyase (169 aa).

Residues His-54, His-58, and Cys-128 each contribute to the Fe cation site.

This sequence belongs to the LuxS family. As to quaternary structure, homodimer. Fe cation is required as a cofactor.

The enzyme catalyses S-(5-deoxy-D-ribos-5-yl)-L-homocysteine = (S)-4,5-dihydroxypentane-2,3-dione + L-homocysteine. In terms of biological role, involved in the synthesis of autoinducer 2 (AI-2) which is secreted by bacteria and is used to communicate both the cell density and the metabolic potential of the environment. The regulation of gene expression in response to changes in cell density is called quorum sensing. Catalyzes the transformation of S-ribosylhomocysteine (RHC) to homocysteine (HC) and 4,5-dihydroxy-2,3-pentadione (DPD). This is S-ribosylhomocysteine lyase from Shewanella pealeana (strain ATCC 700345 / ANG-SQ1).